Reading from the N-terminus, the 489-residue chain is COX3 mRNA-specific translational activator PET494 (489 aa).

The protein localises to the mitochondrion inner membrane. Required for the expression of the mitochondrial gene for cytochrome c oxidase subunit III (COX3). The protein is COX3 mRNA-specific translational activator PET494 (PET494) of Saccharomyces cerevisiae (strain ATCC 204508 / S288c) (Baker's yeast).